Here is a 321-residue protein sequence, read N- to C-terminus: Lipoyl synthase (321 aa).

C68, C73, C79, C94, C98, C101, and S308 together coordinate [4Fe-4S] cluster. In terms of domain architecture, Radical SAM core spans 80 to 297 (FNHGTATFMI…KEIALELGFT (218 aa)).

The protein belongs to the radical SAM superfamily. Lipoyl synthase family. [4Fe-4S] cluster serves as cofactor.

It is found in the cytoplasm. It carries out the reaction [[Fe-S] cluster scaffold protein carrying a second [4Fe-4S](2+) cluster] + N(6)-octanoyl-L-lysyl-[protein] + 2 oxidized [2Fe-2S]-[ferredoxin] + 2 S-adenosyl-L-methionine + 4 H(+) = [[Fe-S] cluster scaffold protein] + N(6)-[(R)-dihydrolipoyl]-L-lysyl-[protein] + 4 Fe(3+) + 2 hydrogen sulfide + 2 5'-deoxyadenosine + 2 L-methionine + 2 reduced [2Fe-2S]-[ferredoxin]. It participates in protein modification; protein lipoylation via endogenous pathway; protein N(6)-(lipoyl)lysine from octanoyl-[acyl-carrier-protein]: step 2/2. Functionally, catalyzes the radical-mediated insertion of two sulfur atoms into the C-6 and C-8 positions of the octanoyl moiety bound to the lipoyl domains of lipoate-dependent enzymes, thereby converting the octanoylated domains into lipoylated derivatives. This Vibrio vulnificus (strain CMCP6) protein is Lipoyl synthase.